The primary structure comprises 1171 residues: WD repeat-containing protein on Y chromosome (1171 aa).

WD repeat units lie at residues 157 to 201 (EIPE…LRSA), 331 to 370 (RIPL…EPSA), 374 to 413 (GHNG…LLQT), 464 to 503 (THAA…RKII), 516 to 555 (IIDI…VVRN), 603 to 643 (FHTD…RRYN), 748 to 787 (KVGD…IPQA), and 831 to 870 (GHLK…LGTL). Residues 1076 to 1171 (RTSFTLSDYT…TNTMKSSNSH (96 aa)) form a disordered region. 2 stretches are compositionally biased toward polar residues: residues 1094–1106 (SSRN…SSGS) and 1161–1171 (KTNTMKSSNSH).

The sequence is that of WD repeat-containing protein on Y chromosome from Drosophila grimshawi (Hawaiian fruit fly).